A 100-amino-acid polypeptide reads, in one-letter code: Large ribosomal subunit protein bL28 (100 aa).

This sequence belongs to the bacterial ribosomal protein bL28 family.

In Gluconacetobacter diazotrophicus (strain ATCC 49037 / DSM 5601 / CCUG 37298 / CIP 103539 / LMG 7603 / PAl5), this protein is Large ribosomal subunit protein bL28.